The chain runs to 539 residues: Glycine betaine transporter 2 (539 aa).

Helical transmembrane passes span Leu44–Leu64, Phe85–Phe105, Ile129–Ala149, Phe175–Met195, Cys231–Ile251, Phe265–Ser285, Ile299–Ile319, Trp348–Ile368, Leu380–Gly400, Val426–Ile446, Phe480–Ile500, and Leu503–Leu523.

The protein belongs to the BCCT transporter (TC 2.A.15) family.

Its subcellular location is the cell inner membrane. Functionally, involved in the uptake of the osmoprotectant glycine betaine. In Vibrio parahaemolyticus serotype O3:K6 (strain RIMD 2210633), this protein is Glycine betaine transporter 2.